We begin with the raw amino-acid sequence, 174 residues long: Regenerating islet-derived protein 3-alpha (174 aa).

A signal peptide spans 1–25 (MLPRLSFNNVSWTLLYYLFIFQVRG). Positions 26–36 (EDSQKAVPSTR) are excised as a propeptide. 3 cysteine pairs are disulfide-bonded: cysteine 39–cysteine 50, cysteine 67–cysteine 170, and cysteine 145–cysteine 162. Positions 46-171 (YRSYCYTLVT…CDVELPFVCK (126 aa)) constitute a C-type lectin domain. The segment at 102-117 (WIWLHDPTMGQQPNGG) is sufficient to activate EXTL3. Zn(2+)-binding residues include histidine 106 and glutamate 120.

Forms a hexameric membrane-permeabilizing oligomeric pore on membrane phospholipids. The hexamer is formed by three dimers related by helical symmetry. Forms filaments, filamentation traps pore complexes and limits damage to host cells. Interacts with EXTL3. Post-translationally, proteolytic processing by trypsin removes an inhibitory N-terminal propeptide and is essential for peptidoglycan binding and antibacterial activity. Low expression found in healthy pancreas.

The protein localises to the secreted. In terms of biological role, bactericidal C-type lectin. The lack of the EPN motif may explain its inability to bind peptidoglycan. Acts as a hormone in response to different stimuli like anti-inflammatory signals, such as IL17A, or gut microbiome. Secreted by different cell types to activate its receptor EXTL3 and induce cell specific signaling pathways. Induced by IL17A in keratinocytes, regulates keratinocyte proliferation and differentiation after skin injury via activation of EXTL3-PI3K-AKT signaling pathway. In parallel, inhibits skin inflammation through the inhibition of inflammatory cytokines such as IL6 and TNF. In pancreas, is able to permealize beta-cells membrane and stimulate their proliferation. This Rattus norvegicus (Rat) protein is Regenerating islet-derived protein 3-alpha (Reg3a).